The primary structure comprises 81 residues: Putative defensin-like protein 102 (81 aa).

The signal sequence occupies residues 1–24; sequence MTTTMKTFVAFVLTVFFIMSSAHC. 4 disulfides stabilise this stretch: Cys43–Cys78, Cys49–Cys71, Cys57–Cys76, and Cys61–Cys77.

The protein belongs to the DEFL family.

It localises to the secreted. The chain is Putative defensin-like protein 102 from Arabidopsis thaliana (Mouse-ear cress).